The chain runs to 1381 residues: Regulator of G-protein signaling 12 (1381 aa).

Positions 21–98 (SVEVARGRAG…VLHMVIAEGT (78 aa)) constitute a PDZ domain. 2 positions are modified to phosphoserine: Ser-171 and Ser-194. Lys-195 is covalently cross-linked (Glycyl lysine isopeptide (Lys-Gly) (interchain with G-Cter in SUMO2)). The PID domain maps to 223–390 (SILNVAMVVG…VLQFISVLYR (168 aa)). 3 disordered regions span residues 409–428 (ADAH…IGNF), 442–528 (LGGG…GAAG), and 620–644 (RKTK…SQRT). The span at 412–428 (HQNNSTSSNSDSGIGNF) shows a compositional bias: polar residues. 2 positions are modified to omega-N-methylarginine: Arg-524 and Arg-633. Ser-661 and Ser-671 each carry phosphoserine. In terms of domain architecture, RGS spans 715–832 (SFERLLQDPV…LKSQLYQECV (118 aa)). A disordered region spans residues 842–942 (PDSQQVPSSP…ESQGSVSSAG (101 aa)). Low complexity predominate over residues 849-869 (SSPASKHSISSDHSNVSTPKK). 2 positions are modified to phosphoserine: Ser-850 and Ser-879. Basic and acidic residues predominate over residues 914–923 (DHGDHAHDAP). A Phosphoserine modification is found at Ser-943. RBD domains follow at residues 962 to 1032 (KHCC…LEKR) and 1034 to 1104 (LFRL…LEER). The segment covering 1102-1117 (EERDPSRGKVSTDKQK) has biased composition (basic and acidic residues). The segment at 1102 to 1169 (EERDPSRGKV…RDPRLSKREE (68 aa)) is disordered. Over residues 1122–1132 (KQNSAVNSSPR) the composition is skewed to polar residues. The span at 1151-1169 (IRGENGKSARDPRLSKREE) shows a compositional bias: basic and acidic residues. A GoLoco domain is found at 1187–1209 (AEEFFELISKAQSNRADDQRGLL). Disordered regions lie at residues 1227-1318 (SELA…QEGT) and 1347-1381 (LMGE…TSRF). A compositionally biased stretch (low complexity) spans 1261-1280 (SDSPATSPASAQSPCSAYSP). Residues 1361 to 1381 (LPPPPTPQDTPGPPRPGTSRF) show a composition bias toward pro residues.

Interacts with GNAI1, GNAI2 and GNAI3; the interactions are GDP-dependent. In terms of tissue distribution, expressed in brain.

The protein localises to the nucleus. Its subcellular location is the cytoplasm. It is found in the cell projection. It localises to the dendrite. The protein resides in the synapse. Its function is as follows. Regulates G protein-coupled receptor signaling cascades. Inhibits signal transduction by increasing the GTPase activity of G protein alpha subunits, thereby driving them into their inactive GDP-bound form. This is Regulator of G-protein signaling 12 (Rgs12) from Mus musculus (Mouse).